We begin with the raw amino-acid sequence, 122 residues long: Large ribosomal subunit protein uL14 (122 aa).

The protein belongs to the universal ribosomal protein uL14 family. As to quaternary structure, part of the 50S ribosomal subunit. Forms a cluster with proteins L3 and L19. In the 70S ribosome, L14 and L19 interact and together make contacts with the 16S rRNA in bridges B5 and B8.

Binds to 23S rRNA. Forms part of two intersubunit bridges in the 70S ribosome. The chain is Large ribosomal subunit protein uL14 from Synechococcus sp. (strain JA-3-3Ab) (Cyanobacteria bacterium Yellowstone A-Prime).